The sequence spans 665 residues: Dystrophia myotonica WD repeat-containing protein (665 aa).

The span at Met-1–Gly-11 shows a compositional bias: gly residues. Disordered stretches follow at residues Met-1 to Pro-91 and Leu-100 to Gly-119. Residue Ala-2 is modified to N-acetylalanine. The span at Pro-52–Pro-64 shows a compositional bias: pro residues. Residues Ala-65 to Ala-76 show a composition bias toward low complexity. Residues Ser-77 to Ala-89 are compositionally biased toward pro residues. 4 WD repeats span residues Ile-208–Pro-248, Val-279–Leu-318, Ser-321–Arg-360, and Gly-363–His-445. 4 disordered regions span residues Ala-380–Leu-413, Pro-446–Pro-506, Arg-524–Leu-564, and Asp-628–Val-665. Over residues Arg-450–Pro-491 the composition is skewed to low complexity. A Phosphoserine modification is found at Ser-487. Arg-543 is modified (omega-N-methylarginine). Residues Ile-592–Glu-629 form a WD 5 repeat. A compositionally biased stretch (polar residues) spans Gln-634–Lys-646. Residues Ser-653–Val-665 are compositionally biased toward low complexity.

Component of the USP12/DMWD/WDR48 deubiquitinating complex. Interacts with USP12; promotes its enzymatic activity. Interacts with USP46. As to expression, widely expressed in brain where it localizes to the olfactory bulb, forebrain, thalamus, hippocampus, cerebellum, cortex and hypothalamus (at protein level). Expression seems to be particularly strong in areas of high synaptic density such as the glomerular layer of the olfactory bulb, and mossy fiber terminal fields of the hippocampus (at protein level). Expressed in retina, with strongest expression in the external and internal plexiform layers (at protein level). Strongly expressed in brain and testis. Also detected at lower levels in heart, kidney, liver, lung, ovary, uterus, bladder and skeletal muscle. In testis, expression seems to be restricted to secondary spermatocytes.

It is found in the cytoplasm. The protein localises to the nucleus. Its subcellular location is the perikaryon. It localises to the cell projection. The protein resides in the dendrite. Its function is as follows. Regulator of the deubiquitinating USP12/DMWD/WDR48 complex. Functions as a cofactor that promotes USP12 enzymatic activity. The polypeptide is Dystrophia myotonica WD repeat-containing protein (Dmwd) (Mus musculus (Mouse)).